We begin with the raw amino-acid sequence, 632 residues long: 2-oxoacid:ferredoxin oxidoreductase subunit alpha (632 aa).

The short motif at 253 to 257 is the YPITP motif element; sequence YPITP. Residues Thr256 and Arg344 each contribute to the substrate site.

In terms of assembly, heterodimer composed of an alpha and a beta subunit.

Its subcellular location is the cytoplasm. The catalysed reaction is a 2-oxocarboxylate + 2 oxidized [2Fe-2S]-[ferredoxin] + CoA = an acyl-CoA + 2 reduced [2Fe-2S]-[ferredoxin] + CO2 + H(+). Its function is as follows. Catalyzes the coenzyme A-dependent oxidative decarboxylation of different 2-oxoacids such as 2-oxoglutarate, pyruvate and 2-oxobutyrate to form their CoA derivatives. The polypeptide is 2-oxoacid:ferredoxin oxidoreductase subunit alpha (Sulfolobus sp).